The primary structure comprises 141 residues: MAGEEMNEDYPVEIHESLTALESSLGAVDDMLKTMMAVSRNELLQKLDPLEQAKVDLVSAYTLNSMFWVYLATQGVNPKEHPVKQELERIRVYMNRVKEITDKKKAAKLDRGAASRFVKNALWEPKAKSTPKVANKGKSKH.

Positions 1-100 (MAGEEMNEDY…RVYMNRVKEI (100 aa)) are required for transcriptional repression. The interval 50-100 (LEQAKVDLVSAYTLNSMFWVYLATQGVNPKEHPVKQELERIRVYMNRVKEI) is interaction with NR1D1. The tract at residues 100 to 141 (ITDKKKAAKLDRGAASRFVKNALWEPKAKSTPKVANKGKSKH) is interaction with NCOR1 and NCOR2. Glycyl lysine isopeptide (Lys-Gly) (interchain with G-Cter in SUMO2) cross-links involve residues lysine 119, lysine 126, and lysine 132.

This sequence belongs to the C1D family. Monomer and homodimer. Interacts with NR1D1, THRA, THRB, NCOR1 and NCOR2. Associates with the RNA exosome complex. Interacts with EXOSC10; the interaction probably mediates the association with the nuclear form of the RNA exosome. The homodimeric form interacts with TSNAX following gamma-radiation. Interacts with RAC3. Post-translationally, phosphorylated by PRKDC. In terms of tissue distribution, kidney, heart, brain, spleen, lung, testis, liver and small intestine.

The protein resides in the nucleus. It is found in the cytoplasm. Its subcellular location is the nucleolus. In terms of biological role, plays a role in the recruitment of the RNA exosome complex to pre-rRNA to mediate the 3'-5' end processing of the 5.8S rRNA; this function may include MPHOSPH6. Can activate PRKDC not only in the presence of linear DNA but also in the presence of supercoiled DNA. Can induce apoptosis in a p53/TP53 dependent manner. May regulate the TRAX/TSN complex formation. Potentiates transcriptional repression by NR1D1 and THRB. The polypeptide is Nuclear nucleic acid-binding protein C1D (C1d) (Mus musculus (Mouse)).